A 333-amino-acid chain; its full sequence is Holliday junction branch migration complex subunit RuvB (333 aa).

Residues 1-182 (MEERMVSAEA…FGVMARLEYY (182 aa)) form a large ATPase domain (RuvB-L) region. Residues I21, R22, G63, K66, T67, T68, 129 to 131 (EDY), R172, Y182, and R219 contribute to the ATP site. T67 is a binding site for Mg(2+). Residues 183-253 (NVEELTTIIE…RAIESLERLQ (71 aa)) are small ATPAse domain (RuvB-S). Residues 256–333 (RLGLDHIDHK…EHFNMEVPNK (78 aa)) are head domain (RuvB-H). DNA is bound by residues R311 and R316.

This sequence belongs to the RuvB family. Homohexamer. Forms an RuvA(8)-RuvB(12)-Holliday junction (HJ) complex. HJ DNA is sandwiched between 2 RuvA tetramers; dsDNA enters through RuvA and exits via RuvB. An RuvB hexamer assembles on each DNA strand where it exits the tetramer. Each RuvB hexamer is contacted by two RuvA subunits (via domain III) on 2 adjacent RuvB subunits; this complex drives branch migration. In the full resolvosome a probable DNA-RuvA(4)-RuvB(12)-RuvC(2) complex forms which resolves the HJ.

The protein resides in the cytoplasm. The enzyme catalyses ATP + H2O = ADP + phosphate + H(+). In terms of biological role, the RuvA-RuvB-RuvC complex processes Holliday junction (HJ) DNA during genetic recombination and DNA repair, while the RuvA-RuvB complex plays an important role in the rescue of blocked DNA replication forks via replication fork reversal (RFR). RuvA specifically binds to HJ cruciform DNA, conferring on it an open structure. The RuvB hexamer acts as an ATP-dependent pump, pulling dsDNA into and through the RuvAB complex. RuvB forms 2 homohexamers on either side of HJ DNA bound by 1 or 2 RuvA tetramers; 4 subunits per hexamer contact DNA at a time. Coordinated motions by a converter formed by DNA-disengaged RuvB subunits stimulates ATP hydrolysis and nucleotide exchange. Immobilization of the converter enables RuvB to convert the ATP-contained energy into a lever motion, pulling 2 nucleotides of DNA out of the RuvA tetramer per ATP hydrolyzed, thus driving DNA branch migration. The RuvB motors rotate together with the DNA substrate, which together with the progressing nucleotide cycle form the mechanistic basis for DNA recombination by continuous HJ branch migration. Branch migration allows RuvC to scan DNA until it finds its consensus sequence, where it cleaves and resolves cruciform DNA. The chain is Holliday junction branch migration complex subunit RuvB from Halalkalibacterium halodurans (strain ATCC BAA-125 / DSM 18197 / FERM 7344 / JCM 9153 / C-125) (Bacillus halodurans).